Here is a 378-residue protein sequence, read N- to C-terminus: UPF0754 membrane protein BCG9842_B4423 (378 aa).

The chain crosses the membrane as a helical span at residues Y357 to L377.

It belongs to the UPF0754 family.

It localises to the cell membrane. The polypeptide is UPF0754 membrane protein BCG9842_B4423 (Bacillus cereus (strain G9842)).